A 477-amino-acid polypeptide reads, in one-letter code: Bifunctional protein HldE (477 aa).

The tract at residues 1–318 (MKVTLPEFER…ENAVRGRADT (318 aa)) is ribokinase. The residue at position 179 (Lys-179) is an N6-acetyllysine. 195–198 (NLSE) is an ATP binding site. Residue Asp-264 is part of the active site. The interval 344–477 (MTNGVFDILH…IKKIQQDKKG (134 aa)) is cytidylyltransferase.

It in the N-terminal section; belongs to the carbohydrate kinase PfkB family. The protein in the C-terminal section; belongs to the cytidylyltransferase family. As to quaternary structure, homodimer.

It carries out the reaction D-glycero-beta-D-manno-heptose 7-phosphate + ATP = D-glycero-beta-D-manno-heptose 1,7-bisphosphate + ADP + H(+). The enzyme catalyses D-glycero-beta-D-manno-heptose 1-phosphate + ATP + H(+) = ADP-D-glycero-beta-D-manno-heptose + diphosphate. Its pathway is nucleotide-sugar biosynthesis; ADP-L-glycero-beta-D-manno-heptose biosynthesis; ADP-L-glycero-beta-D-manno-heptose from D-glycero-beta-D-manno-heptose 7-phosphate: step 1/4. It functions in the pathway nucleotide-sugar biosynthesis; ADP-L-glycero-beta-D-manno-heptose biosynthesis; ADP-L-glycero-beta-D-manno-heptose from D-glycero-beta-D-manno-heptose 7-phosphate: step 3/4. Functionally, catalyzes the phosphorylation of D-glycero-D-manno-heptose 7-phosphate at the C-1 position to selectively form D-glycero-beta-D-manno-heptose-1,7-bisphosphate. In terms of biological role, catalyzes the ADP transfer from ATP to D-glycero-beta-D-manno-heptose 1-phosphate, yielding ADP-D-glycero-beta-D-manno-heptose. This Escherichia fergusonii (strain ATCC 35469 / DSM 13698 / CCUG 18766 / IAM 14443 / JCM 21226 / LMG 7866 / NBRC 102419 / NCTC 12128 / CDC 0568-73) protein is Bifunctional protein HldE.